A 197-amino-acid chain; its full sequence is MSLSIDVTSLPSISSSIFKNESSSTTSTLSGKSIGRSEQYISPDAEAFNKYMLSKSPEDIGPSDSASNDPLTSFSIRSNAVKTNADAGVSMDSSTQSRPSSNVGCDQVDFSLTKGINVSANLDSCVSISTDNKKEKSKKDKSRKHYPRIEADSDSEDYVLDDSDSDDGKCKNCKYKKRCFALRVRMKQVAMQLIEDL.

Residues I17–S30 are compositionally biased toward low complexity. Disordered regions lie at residues I17 to S37, L53 to T72, A85 to G104, and S129 to D166. S67 carries the phosphoserine; by host CK1 modification. Polar residues predominate over residues M91–G104. D92 is a Mg(2+) binding site. The span at D152–S165 shows a compositional bias: acidic residues. Phosphoserine; by host occurs at positions 153, 155, 163, and 165.

Belongs to the rotavirus NSP5 family. Homodimer. Interacts with VP1. Interacts with VP2. Interacts with NSP2; this interaction leads to up-regulation of NSP5 hyperphosphorylation and formation of virus factories. Interacts with NSP6. Participates in the selective exclusion of host proteins from stress granules (SG) and P bodies (PB). Also participates in the sequestration of these remodeled organelles in viral factories. It depends on Mg(2+) as a cofactor. Post-translationally, O-glycosylated. In terms of processing, hyperphosphorylated on serine residues, when in dimeric form. Phosphorylation by host CK1 is required for the hyperphosphorylation of NSP5 dimer.

It localises to the host cytoplasm. In terms of biological role, plays an essential role in the viral genome replication. Participates, together with NSP2, in the formation of viral factories (viroplasms), which are large inclusions in the host cytoplasm where replication intermediates are assembled and viral RNA replication takes place. Orchestrates the recruitment of viroplasmic proteins such as capsid proteins to these factories. Participates in the selective exclusion of host proteins from stress granules (SG) and P bodies (PB). Also participates in the sequestration of these remodeled organelles in viral factories. The sequence is that of Non-structural protein 5 from Rotavirus A (strain RVA/Pig/United States/OSU/1977/G5P9[7]) (RV-A).